Here is a 336-residue protein sequence, read N- to C-terminus: Serpentine receptor class beta-15 (336 aa).

A run of 7 helical transmembrane segments spans residues 24–44 (LFIH…FVIF), 57–77 (FLFS…AIIS), 109–129 (IFMS…FIAM), 142–162 (LGPI…FFIY), 186–206 (FTFF…NSYL), 237–257 (VFVV…IMIL), and 276–296 (GAFT…AVYL).

This sequence belongs to the nematode receptor-like protein srb family.

The protein localises to the membrane. This is Serpentine receptor class beta-15 (srb-15) from Caenorhabditis elegans.